We begin with the raw amino-acid sequence, 131 residues long: Leptin receptor overlapping transcript-like 1 (131 aa).

4 helical membrane passes run 7–27 (LISL…GCAL), 32–52 (QYWP…YCIA), 69–89 (LAIF…VVFA), and 100–120 (ALVL…FLVF).

This sequence belongs to the OB-RGRP/VPS55 family. Interacts with RAB13.

The protein localises to the membrane. Functionally, negatively regulates growth hormone (GH) receptor cell surface expression in liver. May play a role in liver resistance to GH during periods of reduced nutrient availability. The sequence is that of Leptin receptor overlapping transcript-like 1 (Leprotl1) from Rattus norvegicus (Rat).